We begin with the raw amino-acid sequence, 479 residues long: NADH-quinone oxidoreductase subunit N 2 (479 aa).

14 consecutive transmembrane segments (helical) span residues 4 to 24 (FVSF…FVVT), 43 to 63 (GVLV…SGAY), 67 to 87 (AFSQ…GILS), 99 to 119 (PEYF…VSSI), 121 to 141 (VITL…MVAM), 159 to 179 (IMFG…LYGL), 201 to 221 (AVTG…VFPF), 239 to 259 (LIAS…VSLA), 267 to 287 (ATLL…IALV), 294 to 314 (LLGF…VAMD), 318 to 338 (FASA…CFVV), 364 to 384 (LAVT…FVGF), 401 to 421 (ALVV…LQIV), and 444 to 464 (ALCV…AFTI).

The protein belongs to the complex I subunit 2 family. NDH-1 is composed of 14 different subunits. Subunits NuoA, H, J, K, L, M, N constitute the membrane sector of the complex.

The protein localises to the cell inner membrane. It carries out the reaction a quinone + NADH + 5 H(+)(in) = a quinol + NAD(+) + 4 H(+)(out). Its function is as follows. NDH-1 shuttles electrons from NADH, via FMN and iron-sulfur (Fe-S) centers, to quinones in the respiratory chain. The immediate electron acceptor for the enzyme in this species is believed to be ubiquinone. Couples the redox reaction to proton translocation (for every two electrons transferred, four hydrogen ions are translocated across the cytoplasmic membrane), and thus conserves the redox energy in a proton gradient. The chain is NADH-quinone oxidoreductase subunit N 2 from Opitutus terrae (strain DSM 11246 / JCM 15787 / PB90-1).